Consider the following 310-residue polypeptide: 2-methoxy-6-polyprenyl-1,4-benzoquinol methylase, mitochondrial (310 aa).

The N-terminal 6 residues, 1–6 (MAHMRS), are a transit peptide targeting the mitochondrion. S-adenosyl-L-methionine is bound by residues T99, D154, and 182–183 (DA).

Belongs to the class I-like SAM-binding methyltransferase superfamily. MenG/UbiE family. As to quaternary structure, component of a multi-subunit COQ enzyme complex, composed of at least coq3, coq4, coq5, coq6, coq7 and coq9.

Its subcellular location is the mitochondrion inner membrane. It catalyses the reaction a 2-methoxy-6-(all-trans-polyprenyl)benzene-1,4-diol + S-adenosyl-L-methionine = a 5-methoxy-2-methyl-3-(all-trans-polyprenyl)benzene-1,4-diol + S-adenosyl-L-homocysteine + H(+). The protein operates within cofactor biosynthesis; ubiquinone biosynthesis. In terms of biological role, methyltransferase required for the conversion of 2-polyprenyl-6-methoxy-1,4-benzoquinol (DDMQH2) to 2-polyprenyl-3-methyl-6-methoxy-1,4-benzoquinol (DMQH2). The sequence is that of 2-methoxy-6-polyprenyl-1,4-benzoquinol methylase, mitochondrial from Xenopus laevis (African clawed frog).